Reading from the N-terminus, the 192-residue chain is ATP synthase subunit b (192 aa).

A helical membrane pass occupies residues 7 to 27; the sequence is LLLVLGVMLLATGVALAAGGE.

It belongs to the ATPase B chain family. F-type ATPases have 2 components, F(1) - the catalytic core - and F(0) - the membrane proton channel. F(1) has five subunits: alpha(3), beta(3), gamma(1), delta(1), epsilon(1). F(0) has three main subunits: a(1), b(2) and c(10-14). The alpha and beta chains form an alternating ring which encloses part of the gamma chain. F(1) is attached to F(0) by a central stalk formed by the gamma and epsilon chains, while a peripheral stalk is formed by the delta and b chains.

Its subcellular location is the cell inner membrane. Its function is as follows. F(1)F(0) ATP synthase produces ATP from ADP in the presence of a proton or sodium gradient. F-type ATPases consist of two structural domains, F(1) containing the extramembraneous catalytic core and F(0) containing the membrane proton channel, linked together by a central stalk and a peripheral stalk. During catalysis, ATP synthesis in the catalytic domain of F(1) is coupled via a rotary mechanism of the central stalk subunits to proton translocation. Component of the F(0) channel, it forms part of the peripheral stalk, linking F(1) to F(0). The sequence is that of ATP synthase subunit b from Oleidesulfovibrio alaskensis (strain ATCC BAA-1058 / DSM 17464 / G20) (Desulfovibrio alaskensis).